We begin with the raw amino-acid sequence, 585 residues long: Poly(A) RNA polymerase, mitochondrial (585 aa).

The N-terminal 37 residues, 1–37 (MAARGVGLLTRLPVCSQRRNRIPRSISRLLSCPGTIA), are a transit peptide targeting the mitochondrion. Lysine 90 bears the N6-acetyllysine mark. ATP contacts are provided by residues 107-109 (YES) and 244-245 (GC). Residues aspartate 246 and aspartate 248 each contribute to the Mg(2+) site. The PAP-associated domain occupies 441 to 486 (ELLIKEFFEYFGNFAFNKNSINIRQGREQNKPDSSPLYIQNPFETS). Residues 537 to 585 (PGSGHTSLSRKKKKKPMSEKVKGLLASIKSNSPDSSTDTSGKRTISTQA) form a disordered region. Positions 564–585 (IKSNSPDSSTDTSGKRTISTQA) are enriched in polar residues.

Belongs to the DNA polymerase type-B-like family. As to quaternary structure, homodimer. Requires Mg(2+) as cofactor. Mn(2+) serves as cofactor.

The protein resides in the cytoplasm. Its subcellular location is the mitochondrion. The catalysed reaction is RNA(n) + ATP = RNA(n)-3'-adenine ribonucleotide + diphosphate. Functionally, polymerase that creates the 3' poly(A) tail of mitochondrial transcripts. Can use all four nucleotides, but has higher activity with ATP and UTP (in vitro). Plays a role in replication-dependent histone mRNA degradation. May be involved in the terminal uridylation of mature histone mRNAs before their degradation is initiated. Might be responsible for the creation of some UAA stop codons which are not encoded in mtDNA. This Mus musculus (Mouse) protein is Poly(A) RNA polymerase, mitochondrial (Mtpap).